Reading from the N-terminus, the 697-residue chain is T-related protein (697 aa).

The interval Met1–Gly60 is disordered. Composition is skewed to gly residues over residues Val20–Ser35 and His50–Gly60. A DNA-binding region (T-box) is located at residues Leu96–Asp264. The span at Ser316–Ser330 shows a compositional bias: low complexity. 2 disordered regions span residues Ser316–Gly407 and Val462–Pro488. The segment covering Ser337–Tyr351 has biased composition (polar residues). Low complexity-rich tracts occupy residues Ser352–Ser373, Gln381–Ser401, and Ser469–Pro488.

It is found in the nucleus. Its function is as follows. Required for the specification of the hindgut and anal pads. This chain is T-related protein (byn), found in Drosophila melanogaster (Fruit fly).